We begin with the raw amino-acid sequence, 184 residues long: Thiosulfate dehydrogenase [quinone] large subunit (184 aa).

4 helical membrane-spanning segments follow: residues 21–38 (LFPV…GGLR), 86–106 (FLTV…IGLL), 109–129 (LAAL…WLGS), and 137–157 (IGAL…GRVW).

As to quaternary structure, heterodimer of a large and a small subunit in a 2:2 stoichiometry. TQO may associate with the terminal oxidase formed by doxBCE.

Its subcellular location is the cell membrane. It carries out the reaction 6-decylubiquinone + 2 thiosulfate = 6-decylubiquinol + tetrathionate. With respect to regulation, inhibited by sulfite, metabisulfite and dithonite. In terms of biological role, TQO plays a role in sulfur oxidation and is proposed to couple sulfur oxidation to dioxygen reduction; caldariellaquinone or sulfolobus quinone seem to serve to transfer electrons to the electron transport chain terminal oxidase formed by DoxBCE. The chain is Thiosulfate dehydrogenase [quinone] large subunit (doxD) from Acidianus ambivalens (Desulfurolobus ambivalens).